A 179-amino-acid chain; its full sequence is ATP-dependent protease subunit HslV (179 aa).

The active site involves T7. 3 residues coordinate Na(+): G162, C165, and T168.

Belongs to the peptidase T1B family. HslV subfamily. In terms of assembly, a double ring-shaped homohexamer of HslV is capped on each side by a ring-shaped HslU homohexamer. The assembly of the HslU/HslV complex is dependent on binding of ATP.

Its subcellular location is the cytoplasm. The enzyme catalyses ATP-dependent cleavage of peptide bonds with broad specificity.. Its activity is regulated as follows. Allosterically activated by HslU binding. Functionally, protease subunit of a proteasome-like degradation complex believed to be a general protein degrading machinery. The sequence is that of ATP-dependent protease subunit HslV from Teredinibacter turnerae (strain ATCC 39867 / T7901).